The chain runs to 451 residues: Glycine--tRNA ligase (451 aa).

Positions 99 and 168 each coordinate substrate. Residues 200-202, 210-215, 284-285, and 328-331 each bind ATP; these read RNE, FRTREF, EL, and GLDR. 215–219 serves as a coordination point for substrate; sequence FEQME. Residue 324–328 participates in substrate binding; that stretch reads EPSVG.

Belongs to the class-II aminoacyl-tRNA synthetase family. As to quaternary structure, homodimer.

It localises to the cytoplasm. It carries out the reaction tRNA(Gly) + glycine + ATP = glycyl-tRNA(Gly) + AMP + diphosphate. Its function is as follows. Catalyzes the attachment of glycine to tRNA(Gly). In Mycoplasmopsis synoviae (strain 53) (Mycoplasma synoviae), this protein is Glycine--tRNA ligase.